Reading from the N-terminus, the 592-residue chain is PiggyBac transposable element-derived protein 2 (592 aa).

The tract at residues 31-69 (EEEESNNNREEIFIAPPDNAAGEFTDEDSGDEDSQRGAH) is disordered.

The sequence is that of PiggyBac transposable element-derived protein 2 (PGBD2) from Homo sapiens (Human).